The following is a 300-amino-acid chain: Haloalkane dehalogenase 1 (300 aa).

Residues 47–176 (PPIVLLHGEP…FARYSPVLPA (130 aa)) enclose the AB hydrolase-1 domain. Catalysis depends on Asp123, which acts as the Nucleophile. Catalysis depends on Asp250, which acts as the Proton donor. His279 serves as the catalytic Proton acceptor.

It belongs to the haloalkane dehalogenase family. Type 1 subfamily. In terms of assembly, monomer.

It carries out the reaction 1-haloalkane + H2O = a halide anion + a primary alcohol + H(+). Functionally, catalyzes hydrolytic cleavage of carbon-halogen bonds in halogenated aliphatic compounds, leading to the formation of the corresponding primary alcohols, halide ions and protons. This is Haloalkane dehalogenase 1 (dhmA1) from Mycobacterium bovis (strain ATCC BAA-935 / AF2122/97).